Consider the following 160-residue polypeptide: Endoribonuclease YbeY (160 aa).

3 residues coordinate Zn(2+): H112, H116, and H122.

This sequence belongs to the endoribonuclease YbeY family. It depends on Zn(2+) as a cofactor.

The protein resides in the cytoplasm. Functionally, single strand-specific metallo-endoribonuclease involved in late-stage 70S ribosome quality control and in maturation of the 3' terminus of the 16S rRNA. This Maricaulis maris (strain MCS10) (Caulobacter maris) protein is Endoribonuclease YbeY.